The following is a 292-amino-acid chain: MSERLSGHTLLVSLLATPIRHSLSPKMHNEAYAKLGLDYAYLAFEVGTEQLADAVQGIRALGIRGSNVSMPNKEAILPLLDDLSPAAELVGAVNTVVNKDGKGHLVGHITDGIGALRALADEGVSVKNKIITLAGVGGAGKAIAVQLAFDGAKEVRLFNRQATRLSSVQKLVTKLNQLTRTKVTLQDLEDQTAFKEAIRESHLFIDATSVGMKPLENLSLITDPELIRPDLVVFDIVYSPAETKLLAFARQHGAQKVINGLGMVLYQGAEAFKLIIGQDMPVDAIKPLLGDE.

Residues 22–24 (SLS) and serine 69 each bind shikimate. Catalysis depends on lysine 73, which acts as the Proton acceptor. Shikimate is bound by residues asparagine 94 and aspartate 111. NADP(+)-binding positions include 135–139 (GVGGA) and isoleucine 236. Tyrosine 238 lines the shikimate pocket. Residue glycine 260 coordinates NADP(+).

Belongs to the shikimate dehydrogenase family. As to quaternary structure, homodimer.

It catalyses the reaction shikimate + NADP(+) = 3-dehydroshikimate + NADPH + H(+). It participates in metabolic intermediate biosynthesis; chorismate biosynthesis; chorismate from D-erythrose 4-phosphate and phosphoenolpyruvate: step 4/7. Functionally, involved in the biosynthesis of the chorismate, which leads to the biosynthesis of aromatic amino acids. Catalyzes the reversible NADPH linked reduction of 3-dehydroshikimate (DHSA) to yield shikimate (SA). In Streptococcus pyogenes serotype M2 (strain MGAS10270), this protein is Shikimate dehydrogenase (NADP(+)).